The following is a 363-amino-acid chain: uncharacterized protein (363 aa).

The next 7 helical transmembrane spans lie at 20 to 40, 63 to 83, 101 to 121, 141 to 161, 186 to 206, 227 to 247, and 268 to 288; these read WFFT…NTNI, INFA…FLVM, FPLI…GVQS, SVWQ…FTAF, FSLL…IMLA, IFKY…CVVL, and FLIV…WYVL. The interval 329-363 is disordered; that stretch reads PRADLTPNDTLHMESKKKPLSQSPRVVIEEEDVAE.

The protein localises to the membrane. This is an uncharacterized protein from Caenorhabditis elegans.